The sequence spans 580 residues: 2-succinyl-5-enolpyruvyl-6-hydroxy-3-cyclohexene-1-carboxylate synthase (580 aa).

Belongs to the TPP enzyme family. MenD subfamily. In terms of assembly, homodimer. It depends on Mg(2+) as a cofactor. Requires Mn(2+) as cofactor. The cofactor is thiamine diphosphate.

It catalyses the reaction isochorismate + 2-oxoglutarate + H(+) = 5-enolpyruvoyl-6-hydroxy-2-succinyl-cyclohex-3-ene-1-carboxylate + CO2. Its pathway is quinol/quinone metabolism; 1,4-dihydroxy-2-naphthoate biosynthesis; 1,4-dihydroxy-2-naphthoate from chorismate: step 2/7. The protein operates within quinol/quinone metabolism; menaquinone biosynthesis. Functionally, catalyzes the thiamine diphosphate-dependent decarboxylation of 2-oxoglutarate and the subsequent addition of the resulting succinic semialdehyde-thiamine pyrophosphate anion to isochorismate to yield 2-succinyl-5-enolpyruvyl-6-hydroxy-3-cyclohexene-1-carboxylate (SEPHCHC). The polypeptide is 2-succinyl-5-enolpyruvyl-6-hydroxy-3-cyclohexene-1-carboxylate synthase (Bacillus pumilus (strain SAFR-032)).